We begin with the raw amino-acid sequence, 245 residues long: Eukaryotic translation initiation factor 6 (245 aa).

Position 113 is a phosphotyrosine (tyrosine 113). The residue at position 165 (threonine 165) is a Phosphothreonine. Position 166 is a phosphoserine (serine 166). Phosphoserine; by CK1 is present on residues serine 174 and serine 175. Serine 235 is modified (phosphoserine; by PKC). Phosphoserine occurs at positions 239 and 243.

Belongs to the eIF-6 family. In terms of assembly, monomer. Associates with the 60S ribosomal subunit. Interacts with RACK1. Interacts with DICER1, AGO2, TARBP2, MOV10 and RPL7A; they form a large RNA-induced silencing complex (RISC). Phosphorylation at Ser-174 and Ser-175 by CSNK1D/CK1 promotes nuclear export. In terms of processing, ufmylated by UFL1.

It localises to the cytoplasm. The protein localises to the nucleus. Its subcellular location is the nucleolus. Binds to the 60S ribosomal subunit and prevents its association with the 40S ribosomal subunit to form the 80S initiation complex in the cytoplasm. Behaves as a stimulatory translation initiation factor downstream insulin/growth factors. Is also involved in ribosome biogenesis. Associates with pre-60S subunits in the nucleus and is involved in its nuclear export. Cytoplasmic release of TIF6 from 60S subunits and nuclear relocalization is promoted by a RACK1 (RACK1)-dependent protein kinase C activity. In tissues responsive to insulin, controls fatty acid synthesis and glycolysis by exerting translational control of adipogenic transcription factors such as CEBPB, CEBPD and ATF4 that have G/C rich or uORF in their 5'UTR. Required for ROS-dependent megakaryocyte maturation and platelets formation, controls the expression of mitochondrial respiratory chain genes involved in reactive oxygen species (ROS) synthesis. Involved in miRNA-mediated gene silencing by the RNA-induced silencing complex (RISC). Required for both miRNA-mediated translational repression and miRNA-mediated cleavage of complementary mRNAs by RISC. Modulates cell cycle progression and global translation of pre-B cells, its activation seems to be rate-limiting in tumorigenesis and tumor growth. This chain is Eukaryotic translation initiation factor 6, found in Bos taurus (Bovine).